Consider the following 248-residue polypeptide: Large ribosomal subunit protein uL4 (248 aa).

The segment at 45 to 105 (PYGADPYAGM…KDQSKSVNTK (61 aa)) is disordered. Positions 92–105 (PKAEKDQSKSVNTK) are enriched in basic and acidic residues.

It belongs to the universal ribosomal protein uL4 family. In terms of assembly, part of the 50S ribosomal subunit.

Functionally, one of the primary rRNA binding proteins, this protein initially binds near the 5'-end of the 23S rRNA. It is important during the early stages of 50S assembly. It makes multiple contacts with different domains of the 23S rRNA in the assembled 50S subunit and ribosome. In terms of biological role, forms part of the polypeptide exit tunnel. The chain is Large ribosomal subunit protein uL4 from Haloquadratum walsbyi (strain DSM 16790 / HBSQ001).